The following is a 37-amino-acid chain: Mu-thomitoxin-Hme1a (37 aa).

3 cysteine pairs are disulfide-bonded: Cys2–Cys18, Cys9–Cys22, and Cys17–Cys33. Phe37 carries the phenylalanine amide modification.

This sequence belongs to the neurotoxin 01 (U2-agtx) family. Contains 3 disulfide bonds. Expressed by the venom gland.

It localises to the secreted. Blocks the Nav1.2/SCN2A, Nav1.4/SCN4A, and Nav1.6/SCN8A sodium channels. Reduces the peak amplitude of the sodium current and negatively shifts the steady-state inactivation process. Does not shift the threshold potential of activation or the voltage corresponding to maximal current. Does not change the reversal potential of the sodium current. May act on site 1 of the receptor. This chain is Mu-thomitoxin-Hme1a, found in Heriaeus mellotteei (Crab spider).